Consider the following 396-residue polypeptide: Obg-like ATPase 1 (396 aa).

Residues 23-283 (LKIGIVGLPN…LSAEERQKYL (261 aa)) enclose the OBG-type G domain. 32-37 (NVGKST) lines the ATP pocket. Positions 36 and 56 each coordinate Mg(2+). Leucine 231 is a binding site for ATP. The Nuclear export signal motif lies at 267-274 (LELKLQEL). N6-acetyllysine is present on lysine 294. Residues 304–387 (QLEYFFTAGP…EDGDIIFFKF (84 aa)) form the TGS domain.

The protein belongs to the TRAFAC class OBG-HflX-like GTPase superfamily. OBG GTPase family. YchF/OLA1 subfamily. Monomer. Mg(2+) serves as cofactor. As to expression, expressed in all tissues tested but its expression is more abundant in testis, liver, lung, and brain. Overexpressed in several malignancies, including cancers of the colon, rectum, ovary, lung, stomach, and uterus.

It localises to the cytoplasm. Its subcellular location is the nucleus. The protein resides in the nucleolus. Functionally, hydrolyzes ATP, and can also hydrolyze GTP with lower efficiency. Has lower affinity for GTP. The polypeptide is Obg-like ATPase 1 (Homo sapiens (Human)).